The following is a 152-amino-acid chain: Large ribosomal subunit protein bL9 (152 aa).

The protein belongs to the bacterial ribosomal protein bL9 family.

Binds to the 23S rRNA. This chain is Large ribosomal subunit protein bL9, found in Pelagibacter ubique (strain HTCC1062).